The primary structure comprises 243 residues: Aspartate/glutamate leucyltransferase (243 aa).

Belongs to the R-transferase family. Bpt subfamily.

Its subcellular location is the cytoplasm. The catalysed reaction is N-terminal L-glutamyl-[protein] + L-leucyl-tRNA(Leu) = N-terminal L-leucyl-L-glutamyl-[protein] + tRNA(Leu) + H(+). It catalyses the reaction N-terminal L-aspartyl-[protein] + L-leucyl-tRNA(Leu) = N-terminal L-leucyl-L-aspartyl-[protein] + tRNA(Leu) + H(+). Functionally, functions in the N-end rule pathway of protein degradation where it conjugates Leu from its aminoacyl-tRNA to the N-termini of proteins containing an N-terminal aspartate or glutamate. The chain is Aspartate/glutamate leucyltransferase from Teredinibacter turnerae (strain ATCC 39867 / T7901).